Reading from the N-terminus, the 607-residue chain is UvrABC system protein C (607 aa).

In terms of domain architecture, GIY-YIG spans 16–94; that stretch reads GRPGVYRMFD…IKEWRPPYNI (79 aa). Residues 203-238 enclose the UVR domain; the sequence is QQLGNELNAEMEKAAMALNFEKAAELRDQIALLRRV.

The protein belongs to the UvrC family. Interacts with UvrB in an incision complex.

Its subcellular location is the cytoplasm. In terms of biological role, the UvrABC repair system catalyzes the recognition and processing of DNA lesions. UvrC both incises the 5' and 3' sides of the lesion. The N-terminal half is responsible for the 3' incision and the C-terminal half is responsible for the 5' incision. In Pseudomonas entomophila (strain L48), this protein is UvrABC system protein C.